The sequence spans 123 residues: Ribosome-binding factor A (123 aa).

This sequence belongs to the RbfA family. In terms of assembly, monomer. Binds 30S ribosomal subunits, but not 50S ribosomal subunits or 70S ribosomes.

It is found in the cytoplasm. One of several proteins that assist in the late maturation steps of the functional core of the 30S ribosomal subunit. Associates with free 30S ribosomal subunits (but not with 30S subunits that are part of 70S ribosomes or polysomes). Required for efficient processing of 16S rRNA. May interact with the 5'-terminal helix region of 16S rRNA. In Chlamydia trachomatis serovar L2 (strain ATCC VR-902B / DSM 19102 / 434/Bu), this protein is Ribosome-binding factor A.